The chain runs to 549 residues: Cytochrome c oxidase subunit 1 (549 aa).

Residues 18 to 38 (LCYLLVAILSGFVGYVYSLFI) traverse the membrane as a helical segment. Residues E41 and G46 each coordinate Ca(2+). Residues 42–62 (LSLIGCGILFGDYQFYNVLIT) form a helical membrane-spanning segment. H64 provides a ligand contact to Fe(II)-heme a. 5 helical membrane-spanning segments follow: residues 66–86 (LIMV…NYFI), 100–120 (LNNM…NGFL), 148–168 (FVMF…INLL), 186–206 (LFIW…PVLA), and 222–242 (FYDV…WFFG). A Cu cation-binding site is contributed by H243. Residues 243 to 247 (HPEVY) constitute a cross-link (1'-histidyl-3'-tyrosine (His-Tyr)). The next 2 membrane-spanning stretches (helical) occupy residues 246–266 (VYII…VIGF) and 269–289 (VFST…GMFV). Y247 is a binding site for O2. H292 and H293 together coordinate Cu cation. The next 2 helical transmembrane spans lie at 306-326 (YFGG…FNWI) and 340-360 (VYFV…GLFL). The Mg(2+) site is built by H370 and D371. Position 378 (H378) interacts with heme a3. Transmembrane regions (helical) follow at residues 379 to 399 (FHYV…IHFL), 402 to 422 (WLPI…LFIG), 460 to 480 (MLLL…FLFW), 484 to 504 (LFFV…STWL), and 520 to 540 (IVLD…IFFW). H380 contacts Fe(II)-heme a.

The protein belongs to the heme-copper respiratory oxidase family. Component of the cytochrome c oxidase (complex IV, CIV), a multisubunit enzyme composed of a catalytic core of 3 subunits and several supernumerary subunits. The complex exists as a monomer or a dimer and forms supercomplexes (SCs) in the inner mitochondrial membrane with ubiquinol-cytochrome c oxidoreductase (cytochrome b-c1 complex, complex III, CIII). Heme is required as a cofactor. It depends on Cu cation as a cofactor.

The protein resides in the mitochondrion inner membrane. It catalyses the reaction 4 Fe(II)-[cytochrome c] + O2 + 8 H(+)(in) = 4 Fe(III)-[cytochrome c] + 2 H2O + 4 H(+)(out). The protein operates within energy metabolism; oxidative phosphorylation. In terms of biological role, component of the cytochrome c oxidase, the last enzyme in the mitochondrial electron transport chain which drives oxidative phosphorylation. The respiratory chain contains 3 multisubunit complexes succinate dehydrogenase (complex II, CII), ubiquinol-cytochrome c oxidoreductase (cytochrome b-c1 complex, complex III, CIII) and cytochrome c oxidase (complex IV, CIV), that cooperate to transfer electrons derived from NADH and succinate to molecular oxygen, creating an electrochemical gradient over the inner membrane that drives transmembrane transport and the ATP synthase. Cytochrome c oxidase is the component of the respiratory chain that catalyzes the reduction of oxygen to water. Electrons originating from reduced cytochrome c in the intermembrane space (IMS) are transferred via the dinuclear copper A center (CU(A)) of subunit 2 and heme A of subunit 1 to the active site in subunit 1, a binuclear center (BNC) formed by heme A3 and copper B (CU(B)). The BNC reduces molecular oxygen to 2 water molecules using 4 electrons from cytochrome c in the IMS and 4 protons from the mitochondrial matrix. The sequence is that of Cytochrome c oxidase subunit 1 (COI) from Leishmania tarentolae (Sauroleishmania tarentolae).